A 347-amino-acid chain; its full sequence is tRNA pseudouridine synthase D (347 aa).

Residue aspartate 81 is the Nucleophile of the active site. Positions 158–304 (GVPNYFGNQR…MRHDRRAIAL (147 aa)) constitute a TRUD domain.

This sequence belongs to the pseudouridine synthase TruD family.

It carries out the reaction uridine(13) in tRNA = pseudouridine(13) in tRNA. Functionally, responsible for synthesis of pseudouridine from uracil-13 in transfer RNAs. The polypeptide is tRNA pseudouridine synthase D (Vibrio vulnificus (strain YJ016)).